The chain runs to 254 residues: UPF0328 protein ECU01_0070/ECU01_1540/ECU02_1570/ECU04_0080/ECU08_2100 (254 aa).

It belongs to the UPF0328 family.

This is UPF0328 protein ECU01_0070/ECU01_1540/ECU02_1570/ECU04_0080/ECU08_2100 from Encephalitozoon cuniculi (strain GB-M1) (Microsporidian parasite).